The primary structure comprises 552 residues: Probable beta-glucosidase btgE (552 aa).

An N-terminal signal peptide occupies residues 1–18 (MRGAILATAAALAGTAMA). Residues 250-291 (EPTSAPAAPSTTAVPATTTAAVPSTSSAAPSSSSTAPASTGA) form a disordered region. Positions 251–289 (PTSAPAAPSTTAVPATTTAAVPSTSSAAPSSSSTAPAST) are enriched in low complexity. The Proton donor role is filled by Glu-392. Glu-488 serves as the catalytic Nucleophile.

Belongs to the glycosyl hydrolase 17 family.

It localises to the secreted. Its subcellular location is the cell wall. The catalysed reaction is Hydrolysis of terminal, non-reducing beta-D-glucosyl residues with release of beta-D-glucose.. It participates in glycan metabolism; cellulose degradation. In terms of biological role, beta-glucosidases are one of a number of cellulolytic enzymes involved in the degradation of cellulosic biomass. Catalyzes the last step releasing glucose from the inhibitory cellobiose. The protein is Probable beta-glucosidase btgE (btgE) of Neosartorya fischeri (strain ATCC 1020 / DSM 3700 / CBS 544.65 / FGSC A1164 / JCM 1740 / NRRL 181 / WB 181) (Aspergillus fischerianus).